A 1521-amino-acid chain; its full sequence is Protein OPAQUE1 (1521 aa).

Residues 4–53 (RKGLKVWVEEKGEGWVEAEVVEAKERAVVVFSSQRKKITVSPEKLLPRDT) form the Myosin N-terminal SH3-like domain. One can recognise a Myosin motor domain in the interval 60-731 (GHVDDMTKLT…QIAILDMRRA (672 aa)). ATP contacts are provided by residues 155–162 (GESGAGKT) and 208–216 (NDNSSRFGK). 4 actin-binding regions span residues 493-527 (LIEKKPIGIIALLDEACMFPKSTHETFATKMFRNF), 529-552 (SHLRLERTKFSETDFTISHYAGKV), 587-612 (FTSLPEESIRSSYKFSSVASRFKLQL), and 612-634 (LQALMETLNSTEPHYVRCVKPNS). 6 IQ domains span residues 733 to 755 (ILDNAARHIQGRFRTFITRKEFV), 756 to 778 (KTREASISIQAYCRGCLARKMFA), 781 to 803 (RETAAAVIVQKYVRRWLLRRAHL), 804 to 826 (QACLAALLIQSYIRGFIARRYFS), 829 to 851 (REHKAATVIQSTWRRRKFVILFQ), and 852 to 874 (NYRQATVAIQCSWRQKLARKELR). Coiled-coil stretches lie at residues 870–910 (RKEL…ERRL) and 974–1050 (SAEA…LRQK). The 298-residue stretch at 1162–1459 (DHVIEAINDV…VAAMREMVNK (298 aa)) folds into the Dilute domain.

This sequence belongs to the TRAFAC class myosin-kinesin ATPase superfamily. Myosin family. Plant myosin class XI subfamily. In terms of assembly, interacts (via C-terminus) with HIP (via C-terminus), but not with zeins, FL1 or intrinsic proteins of protein bodies. High expression in kernels and stems, intermediate in ears and leaves, and low in roots, silks and tassels.

The protein localises to the cytoplasm. In terms of biological role, myosin XI motor protein required for endoplasmic reticulum motility and protein body formation. May function by binding with its tail domain to receptor proteins on membranes and exerting force with its N-terminal motor domain against actin filaments, thereby transporting its cargo along polarized actin cables. The polypeptide is Protein OPAQUE1 (Zea mays (Maize)).